Consider the following 363-residue polypeptide: tRNA (guanine(26)-N(2))-dimethyltransferase (363 aa).

The region spanning Val5–Phe352 is the Trm1 methyltransferase domain. S-adenosyl-L-methionine contacts are provided by Arg40, Arg67, Asp85, Asp111, and Ala112.

This sequence belongs to the class I-like SAM-binding methyltransferase superfamily. Trm1 family.

The enzyme catalyses guanosine(26) in tRNA + 2 S-adenosyl-L-methionine = N(2)-dimethylguanosine(26) in tRNA + 2 S-adenosyl-L-homocysteine + 2 H(+). Dimethylates a single guanine residue at position 26 of a number of tRNAs using S-adenosyl-L-methionine as donor of the methyl groups. The polypeptide is tRNA (guanine(26)-N(2))-dimethyltransferase (Pyrobaculum aerophilum (strain ATCC 51768 / DSM 7523 / JCM 9630 / CIP 104966 / NBRC 100827 / IM2)).